A 681-amino-acid polypeptide reads, in one-letter code: Ribosomal L1 domain-containing protein CG13096 (681 aa).

Disordered stretches follow at residues M1–K248 and D579–E681. Residues S15 and S17 each carry the phosphoserine modification. Over residues V54–Q74 the composition is skewed to basic and acidic residues. S89 bears the Phosphoserine mark. The segment covering K103–G112 has biased composition (low complexity). S128 carries the phosphoserine modification. The segment covering Q189–P217 has biased composition (low complexity). Residues K599–A610 are compositionally biased toward basic and acidic residues. The span at E611–E681 shows a compositional bias: acidic residues.

The protein belongs to the universal ribosomal protein uL1 family. Highly divergent.

The polypeptide is Ribosomal L1 domain-containing protein CG13096 (Drosophila melanogaster (Fruit fly)).